Reading from the N-terminus, the 856-residue chain is Villin-like protein (856 aa).

Gelsolin-like repeat units follow at residues 22–74 (RKMV…EAQG), 146–186 (VSAT…SEKA), 263–307 (LVVL…QERK), 401–450 (LHRQ…DEIE), 521–561 (TRTM…DQRE), and 624–665 (LVLA…WKEA). The tract at residues 762–796 (SQDSSENDLVRSPKSAGSRTSSSVSSTSATINGGL) is disordered. Residues 776–791 (SAGSRTSSSVSSTSAT) show a composition bias toward low complexity. An HP domain is found at 790-856 (ATINGGLRRE…RQEKKQLGFF (67 aa)).

Belongs to the villin/gelsolin family. In terms of tissue distribution, ubiquitously expressed in 16 tissues examined.

In terms of biological role, possible tumor suppressor. This is Villin-like protein (VILL) from Homo sapiens (Human).